We begin with the raw amino-acid sequence, 278 residues long: Tetraspanin-13 (278 aa).

The Cytoplasmic segment spans residues 1–25; sequence MARDKEDQNNENPSIVQNMSFPFNT. A helical transmembrane segment spans residues 26 to 46; it reads IFLISSAIFLVTAAFWFVAVM. Residues 47–62 lie on the Extracellular side of the membrane; it reads TLHYRTDECNRFVTTP. A helical transmembrane segment spans residues 63–83; the sequence is GIFISFSLLAMSLTGFYAAYF. Residues 84–92 are Cytoplasmic-facing; it reads KSDCLFRIH. The chain crosses the membrane as a helical span at residues 93–113; that stretch reads FFIFFLWMFVVVSKAIFVIFL. The Extracellular segment spans residues 114–249; that stretch reads HKETNPRLFP…DVHNTSFSIT (136 aa). N202, N220, and N243 each carry an N-linked (GlcNAc...) asparagine glycan. The chain crosses the membrane as a helical span at residues 250–270; sequence VNIIHIIFSLCIGMTGWFAWL. Over 271-278 the chain is Cytoplasmic; the sequence is RILRESQK.

The protein belongs to the tetraspanin (TM4SF) family.

It is found in the membrane. May be involved in the regulation of cell differentiation. This Arabidopsis thaliana (Mouse-ear cress) protein is Tetraspanin-13 (TET13).